The following is a 177-amino-acid chain: Meiotically up-regulated gene 121 protein (177 aa).

An N-terminal signal peptide occupies residues 1 to 23 (MKGFVVISRFILTLFILITPGLA). Asparagine 121 carries N-linked (GlcNAc...) asparagine glycosylation.

The protein localises to the endoplasmic reticulum. It is found in the golgi apparatus. Has a role in meiosis. The chain is Meiotically up-regulated gene 121 protein (mug121) from Schizosaccharomyces pombe (strain 972 / ATCC 24843) (Fission yeast).